The sequence spans 87 residues: RNA-binding protein Hfq (87 aa).

Residues 9–68 (DPFLNALRRERIPVSIYLVNGIKLQGQIESFDQFVILLKNTVNQMVYKHAISTVVPARPV) enclose the Sm domain. Residues 65-87 (ARPVSHHSGDRPASDRPAEKSEE) form a disordered region. The span at 71–87 (HSGDRPASDRPAEKSEE) shows a compositional bias: basic and acidic residues.

Belongs to the Hfq family.

Functionally, RNA chaperone that binds small regulatory RNA (sRNAs) and mRNAs to facilitate mRNA translational regulation in response to envelope stress, environmental stress and changes in metabolite concentrations. Also binds with high specificity to tRNAs. Essential for virulence in the suckling mouse model of cholera pathogenesis. The sequence is that of RNA-binding protein Hfq from Vibrio cholerae serotype O1 (strain ATCC 39315 / El Tor Inaba N16961).